We begin with the raw amino-acid sequence, 1133 residues long: DNA-directed RNA polymerase subunit beta (1133 aa).

The interval 1085-1133 is disordered; it reads ADVSSRHTPSRPTYESVTSEDLSPAAGGTFTLARRSREEDEDREEEDDF. Polar residues predominate over residues 1090 to 1105; sequence RHTPSRPTYESVTSED. Positions 1123 to 1133 are enriched in acidic residues; the sequence is EDEDREEEDDF.

This sequence belongs to the RNA polymerase beta chain family. As to quaternary structure, in cyanobacteria the RNAP catalytic core is composed of 2 alpha, 1 beta, 1 beta', 1 gamma and 1 omega subunit. When a sigma factor is associated with the core the holoenzyme is formed, which can initiate transcription.

The enzyme catalyses RNA(n) + a ribonucleoside 5'-triphosphate = RNA(n+1) + diphosphate. Its function is as follows. DNA-dependent RNA polymerase catalyzes the transcription of DNA into RNA using the four ribonucleoside triphosphates as substrates. This Synechococcus sp. (strain JA-3-3Ab) (Cyanobacteria bacterium Yellowstone A-Prime) protein is DNA-directed RNA polymerase subunit beta.